The primary structure comprises 97 residues: Protein YukE (97 aa).

The stretch at 21–94 (VESQEVLNQV…ESTDQDIANQ (74 aa)) forms a coiled coil.

Belongs to the WXG100 family. sagEsxA-like subfamily. In terms of assembly, homodimer.

The protein resides in the secreted. In terms of biological role, required to deliver LXG toxins to target cells. This Bacillus subtilis (strain 168) protein is Protein YukE (yukE).